A 308-amino-acid polypeptide reads, in one-letter code: Ornithine carbamoyltransferase (308 aa).

Residues arginine 103 and 130–133 (HPAQ) contribute to the carbamoyl phosphate site. Residues asparagine 162, aspartate 221, and 225 to 226 (SM) each bind L-ornithine. Residues 261–262 (CL) and arginine 289 contribute to the carbamoyl phosphate site.

The protein belongs to the aspartate/ornithine carbamoyltransferase superfamily. OTCase family.

Its subcellular location is the cytoplasm. The enzyme catalyses carbamoyl phosphate + L-ornithine = L-citrulline + phosphate + H(+). Its pathway is amino-acid biosynthesis; L-arginine biosynthesis; L-arginine from L-ornithine and carbamoyl phosphate: step 1/3. Functionally, reversibly catalyzes the transfer of the carbamoyl group from carbamoyl phosphate (CP) to the N(epsilon) atom of ornithine (ORN) to produce L-citrulline. The sequence is that of Ornithine carbamoyltransferase from Deinococcus radiodurans (strain ATCC 13939 / DSM 20539 / JCM 16871 / CCUG 27074 / LMG 4051 / NBRC 15346 / NCIMB 9279 / VKM B-1422 / R1).